The primary structure comprises 214 residues: MMSYVRMTLYHGTDRKSAEKIMESKEILPSQGDNHWLGDGIYFYEEEFHAFKWIWYKEKNRNRLLKNFAIIKAEVICEESRIFDLTKIEHKLLFDMMYKLINTTKLRLDKLRGDMCAEGVVINYMFKNKELGYNKRFDIVRALFPIPVKKYQKIENREKNKKYKERTHRLTFMPEIQVCVKNPSVIKKLEWYDLEKTIDKFLIYTEIYKEDLGI.

This is an uncharacterized protein from Methanocaldococcus jannaschii (strain ATCC 43067 / DSM 2661 / JAL-1 / JCM 10045 / NBRC 100440) (Methanococcus jannaschii).